A 246-amino-acid chain; its full sequence is tRNA pseudouridine synthase A (246 aa).

Residue aspartate 54 is the Nucleophile of the active site. Tyrosine 112 contacts substrate.

It belongs to the tRNA pseudouridine synthase TruA family. Homodimer.

It catalyses the reaction uridine(38/39/40) in tRNA = pseudouridine(38/39/40) in tRNA. Its function is as follows. Formation of pseudouridine at positions 38, 39 and 40 in the anticodon stem and loop of transfer RNAs. This Moorella thermoacetica (strain ATCC 39073 / JCM 9320) protein is tRNA pseudouridine synthase A.